Here is a 189-residue protein sequence, read N- to C-terminus: Elongation factor P (189 aa).

Belongs to the elongation factor P family.

The protein localises to the cytoplasm. The protein operates within protein biosynthesis; polypeptide chain elongation. Involved in peptide bond synthesis. Stimulates efficient translation and peptide-bond synthesis on native or reconstituted 70S ribosomes in vitro. Probably functions indirectly by altering the affinity of the ribosome for aminoacyl-tRNA, thus increasing their reactivity as acceptors for peptidyl transferase. The chain is Elongation factor P from Aster yellows witches'-broom phytoplasma (strain AYWB).